A 718-amino-acid chain; its full sequence is Catalase (718 aa).

Residues His-103 and Asn-176 contribute to the active site. Tyr-390 provides a ligand contact to heme.

It belongs to the catalase family. Heme serves as cofactor.

The protein resides in the peroxisome matrix. The enzyme catalyses 2 H2O2 = O2 + 2 H2O. In terms of biological role, catalyzes the degradation of hydrogen peroxide (H(2)O(2)) generated by peroxisomal oxidases to water and oxygen, thereby protecting cells from the toxic effects of hydrogen peroxide. The polypeptide is Catalase (CAT1) (Blumeria hordei (Barley powdery mildew)).